The following is a 478-amino-acid chain: MKILHICSEMYPLIKTGGLADVMGALPYAQQQSGNDVRVLIPLYPQVAEKIGETNEVATIGTFAGLVTIRFTYFNGLGVYVIDAPHLFQRSGNPYHDSGYADYPDNYKRFALLGYLGAQLSEGLDQWWGKADILHAHDWQGGLACAYLKSWNSPVKSVFTIHNIAYPGRFHSYHLHELGLPWHFFQAEGLEFYGEISYLKAGLYFADKITTVSPTYALEITEEIAGGGMHGLLQTRKAQGRLHGVLNGVDDTVWNPETDTNIVATYKPSYMQGKSKNKAELQQMFHLPEDKDAMLMVMVTRLTEQKGADFILDRIDELMEERVQLVVLGSGSPHLEYLLNEARSRHPEQIGIYIGYNEALSHQIIAGGDVILVPSRFEPCGLTQLYGLKYGTLPLVRRTGGLADTVVDSNKESIEQRTATGFVFNYPSSDDFLEAFRRAVNLWKKNKLWSSVRQNALAQDFGWARAAASYQAIYQEIV.

Position 15 (lysine 15) interacts with ADP-alpha-D-glucose.

This sequence belongs to the glycosyltransferase 1 family. Bacterial/plant glycogen synthase subfamily.

The catalysed reaction is [(1-&gt;4)-alpha-D-glucosyl](n) + ADP-alpha-D-glucose = [(1-&gt;4)-alpha-D-glucosyl](n+1) + ADP + H(+). It participates in glycan biosynthesis; glycogen biosynthesis. Functionally, synthesizes alpha-1,4-glucan chains using ADP-glucose. In Actinobacillus pleuropneumoniae serotype 5b (strain L20), this protein is Glycogen synthase.